Consider the following 432-residue polypeptide: MPEYVNWLRHASPYINAHRDCTFVVMLPGDGVAHPNFGNIVHDLVLLHSLGVRLVLVHGSRPQIESRLAQRGITPRYHRDLRITDTETLECVIDAVGQLRISIEARLSMDMAASPMQGSRLRVTSGNVVTARPIGVLEGVDYQHTGEVRRVDRKGINRLLDERHIVLLSPLGYSPTGEIFNLACEDVATRAAIDLAADKLLLFGAETGLLDEQGRLVRELRPQQVPAHLQRLGANYQAELLDAAAEACRGGVARSHIVSYAENGALLTELFTRDGGGTLVAQEQFELVREAAIEDVGGLMDLITPLEEQGILVRRSREVLEREITQFSVVEREGLIIACAALYPIADSESGELACLAVNPEYRHGGRGDELLERIENRARALGIKTLFVLTTRTAHWFRERGFEPSSVDRLPSARASLYNYQRNSKIFEKAI.

The N-acetyltransferase domain maps to 286 to 425 (ELVREAAIED…ASLYNYQRNS (140 aa)).

It belongs to the acetyltransferase family. ArgA subfamily.

The protein localises to the cytoplasm. It carries out the reaction L-glutamate + acetyl-CoA = N-acetyl-L-glutamate + CoA + H(+). It participates in amino-acid biosynthesis; L-arginine biosynthesis; N(2)-acetyl-L-ornithine from L-glutamate: step 1/4. This Pseudomonas syringae pv. syringae protein is Amino-acid acetyltransferase (argA).